We begin with the raw amino-acid sequence, 568 residues long: NADPH oxidase 3 (568 aa).

Residues 1-13 (MMGCWILNEGLST) lie on the Cytoplasmic side of the membrane. A helical membrane pass occupies residues 14–34 (ILVLSWLGINFYLFIDTFYWY). Residues 35–51 (EEEESFHYTRVILGSTL) are Extracellular-facing. A helical membrane pass occupies residues 52–72 (AWARASALCLNFNCMLILIPV). The region spanning 55–284 (RASALCLNFN…VVLYACERII (230 aa)) is the Ferric oxidoreductase domain. Over 73–103 (SRNLISFIRGTSICCRGPWRRQLDKNLRFHK) the chain is Cytoplasmic. A helical membrane pass occupies residues 104 to 124 (LVAYGIAVNATIHIVAHFFNL). At 125–167 (ERYHWSQSEEAQGLLAALSKLGNTPNESYLNPVRTFPTNTTTE) the chain is on the extracellular side. Asn-163 carries an N-linked (GlcNAc...) asparagine glycan. Residues 168 to 188 (LLRTIAGVTGLVISLALVLIM) form a helical membrane-spanning segment. At 189–201 (TSSTEFIRQASYE) the chain is on the cytoplasmic side. A helical transmembrane segment spans residues 202–222 (LFWYTHHVFIVFFLSLAIHGT). The Extracellular portion of the chain corresponds to 223–395 (GRIVRGQTQD…DGPFGTALTD (173 aa)). The N-linked (GlcNAc...) asparagine glycan is linked to Asn-238. The FAD-binding FR-type domain occupies 285–395 (RFWRFQQEVV…DGPFGTALTD (111 aa)). A helical transmembrane segment spans residues 396 to 416 (VFHYPVCVCVAAGIGVTPFAA). The Cytoplasmic segment spans residues 417 to 568 (LLKSIWYKCS…VHFYYNKESF (152 aa)).

As to quaternary structure, interacts with CYBA/p22phox. Heterodimerization with CYBA/p22phox is essential for its activity and cell membrane localization. The cofactor is heme. Post-translationally, N-glycosylated in a CYBA/p22phox-dependent manner.

It localises to the cell membrane. The enzyme catalyses NADPH + 2 O2 = 2 superoxide + NADP(+) + H(+). Activated by the ototoxic drug cisplatin. Activated by NOXO1. Cooperatively activated by NCF1 and NCF2 or NOXA1 in a phorbol 12-myristate 13-acetate (PMA)-dependent manner. Inhibited by diphenyleneiodonium chloride. NADPH oxidase that catalyzes the generation of superoxide from molecular oxygen utilizing NADPH as an electron donor, upon formation of a complex with CYBA/p22phox. Plays a role in the biogenesis of otoconia/otolith, which are crystalline structures of the inner ear involved in the perception of gravity. The protein is NADPH oxidase 3 (NOX3) of Homo sapiens (Human).